Consider the following 181-residue polypeptide: MVRSLGCKAHFGTRQEVRNSTMAIKLSIDLSDATFAELSAVIGYAHQLGVDADEKLTFEGTVLNIEFDGDLQFDDVFDAFDEAEIELDNPREDGPIYADDLIDEDEDYRAQTKSQINDEVINEIRDGISSFVDGIVNGLGQGRRGGRYGDFGGPRGPRGPRNDGPFGPFGPFGPGYRGPRF.

Gly residues-rich tracts occupy residues 143-156 and 170-181; these read RRGG…GPRG and GPFGPGYRGPRF. Residues 143 to 181 form a disordered region; that stretch reads RRGGRYGDFGGPRGPRGPRNDGPFGPFGPFGPGYRGPRF.

As to quaternary structure, has been detected in a cytochrome bc1-aa3 supercomplex; its deletion however leaves complex activity unaffected.

This is an uncharacterized protein from Corynebacterium glutamicum (strain ATCC 13032 / DSM 20300 / JCM 1318 / BCRC 11384 / CCUG 27702 / LMG 3730 / NBRC 12168 / NCIMB 10025 / NRRL B-2784 / 534).